The chain runs to 180 residues: Adenine phosphoribosyltransferase (180 aa).

Belongs to the purine/pyrimidine phosphoribosyltransferase family. As to quaternary structure, homodimer.

The protein resides in the cytoplasm. The catalysed reaction is AMP + diphosphate = 5-phospho-alpha-D-ribose 1-diphosphate + adenine. The protein operates within purine metabolism; AMP biosynthesis via salvage pathway; AMP from adenine: step 1/1. Functionally, catalyzes a salvage reaction resulting in the formation of AMP, that is energically less costly than de novo synthesis. The chain is Adenine phosphoribosyltransferase from Marinomonas sp. (strain MWYL1).